Here is a 320-residue protein sequence, read N- to C-terminus: Malate dehydrogenase (320 aa).

NAD(+)-binding positions include 10–15 (GAGQIG) and aspartate 34. 2 residues coordinate substrate: arginine 83 and arginine 89. Residues asparagine 96 and 119-121 (ITN) contribute to the NAD(+) site. Substrate-binding residues include asparagine 121 and arginine 152. The Proton acceptor role is filled by histidine 176.

The protein belongs to the LDH/MDH superfamily. MDH type 3 family.

It catalyses the reaction (S)-malate + NAD(+) = oxaloacetate + NADH + H(+). Functionally, catalyzes the reversible oxidation of malate to oxaloacetate. This is Malate dehydrogenase from Beijerinckia indica subsp. indica (strain ATCC 9039 / DSM 1715 / NCIMB 8712).